A 464-amino-acid chain; its full sequence is NADH-ubiquinone oxidoreductase chain 4 (464 aa).

Transmembrane regions (helical) follow at residues 18–38, 54–74, 79–99, 102–122, 131–151, 168–188, 207–227, 239–259, 266–286, 297–317, 332–352, 375–395, and 420–440; these read LLPT…VLPT, IADI…IANW, SLLY…NFMC, MLSF…LIGL, AADY…LAIG, VVLS…GIMV, PLAG…YAII, VLYT…TSII, LKVI…LGIL, LILS…VGGI, GLLT…FSNI, TILG…MLKV, and LLMI…NGII.

Belongs to the complex I subunit 4 family.

It is found in the mitochondrion membrane. The enzyme catalyses a ubiquinone + NADH + 5 H(+)(in) = a ubiquinol + NAD(+) + 4 H(+)(out). In terms of biological role, core subunit of the mitochondrial membrane respiratory chain NADH dehydrogenase (Complex I) that is believed to belong to the minimal assembly required for catalysis. Complex I functions in the transfer of electrons from NADH to the respiratory chain. The immediate electron acceptor for the enzyme is believed to be ubiquinone. This is NADH-ubiquinone oxidoreductase chain 4 (NAD4) from Candida albicans (strain SC5314 / ATCC MYA-2876) (Yeast).